A 180-amino-acid chain; its full sequence is uncharacterized protein (180 aa).

2 helical membrane passes run 37-59 and 128-147; these read VLHA…FPSF and AGSA…VLFV.

It is found in the cell membrane. This is an uncharacterized protein from Treponema pallidum (strain Nichols).